A 52-amino-acid chain; its full sequence is Protein RepA (52 aa).

Positions 20–40 form a DNA-binding region, H-T-H motif; it reads KLEELAQKYGMTKSGLVNFLV.

The protein belongs to the transcriptional regulatory CopG/NikR family. Homodimer.

Its function is as follows. Regulates the plasmid copy number. RepA binds to the repAB promoter thus controlling the synthesis of the plasmid replication initiator protein RepB. The chain is Protein RepA (repA) from Lactiplantibacillus plantarum (Lactobacillus plantarum).